Reading from the N-terminus, the 332-residue chain is Ferredoxin--NADP reductase (332 aa).

The FAD site is built by D33, Q41, Y46, A86, I121, D282, and S325.

Belongs to the ferredoxin--NADP reductase type 2 family. In terms of assembly, homodimer. It depends on FAD as a cofactor.

The enzyme catalyses 2 reduced [2Fe-2S]-[ferredoxin] + NADP(+) + H(+) = 2 oxidized [2Fe-2S]-[ferredoxin] + NADPH. In Metallosphaera sedula (strain ATCC 51363 / DSM 5348 / JCM 9185 / NBRC 15509 / TH2), this protein is Ferredoxin--NADP reductase.